A 120-amino-acid chain; its full sequence is MRLPAQLLGLLMLWIPGSSADIVMTQTPLSLSVTPGQPASISCKSSQSLLHSDGKTYLYWYLQKPGQPPQLLIYEVSNRFSGVPDRFSGSGSGTDFTLKISRVEAEDVGVYYCMQSIQLP.

An N-terminal signal peptide occupies residues 1-20; that stretch reads MRLPAQLLGLLMLWIPGSSA. The tract at residues 21–43 is framework-1; the sequence is DIVMTQTPLSLSVTPGQPASISC. The Ig-like domain occupies 21-120; sequence DIVMTQTPLS…YYCMQSIQLP (100 aa). The cysteines at positions 43 and 113 are disulfide-linked. Residues 44–59 are complementarity-determining-1; it reads KSSQSLLHSDGKTYLY. The segment at 60-74 is framework-2; it reads WYLQKPGQPPQLLIY. The complementarity-determining-2 stretch occupies residues 75 to 81; that stretch reads EVSNRFS. The framework-3 stretch occupies residues 82–113; sequence GVPDRFSGSGSGTDFTLKISRVEAEDVGVYYC. Residues 114-120 form a complementarity-determining-3 region; it reads MQSIQLP.

In terms of assembly, immunoglobulins are composed of two identical heavy chains and two identical light chains; disulfide-linked.

Its subcellular location is the secreted. The protein resides in the cell membrane. In terms of biological role, v region of the variable domain of immunoglobulin light chains that participates in the antigen recognition. Immunoglobulins, also known as antibodies, are membrane-bound or secreted glycoproteins produced by B lymphocytes. In the recognition phase of humoral immunity, the membrane-bound immunoglobulins serve as receptors which, upon binding of a specific antigen, trigger the clonal expansion and differentiation of B lymphocytes into immunoglobulins-secreting plasma cells. Secreted immunoglobulins mediate the effector phase of humoral immunity, which results in the elimination of bound antigens. The antigen binding site is formed by the variable domain of one heavy chain, together with that of its associated light chain. Thus, each immunoglobulin has two antigen binding sites with remarkable affinity for a particular antigen. The variable domains are assembled by a process called V-(D)-J rearrangement and can then be subjected to somatic hypermutations which, after exposure to antigen and selection, allow affinity maturation for a particular antigen. The chain is Immunoglobulin kappa variable 2D-29 from Homo sapiens (Human).